A 138-amino-acid chain; its full sequence is Acidic phospholipase A2 homolog sistruxin A (138 aa).

Positions 1-37 are cleaved as a signal peptide; sequence MRALWIVAVLLLGVEGSLVEFETLIMKIAGRSGVWYY. Intrachain disulfides connect C42-C131, C44-C60, C59-C111, C65-C138, C66-C104, C73-C97, and C91-C102. A propeptide spanning residues 78–83 is cleaved from the precursor; the sequence is DVYTYR. Residue Q84 is modified to Pyrrolidone carboxylic acid. Residues 119-124 constitute a propeptide that is removed on maturation; that stretch reads YNHKYW.

It belongs to the phospholipase A2 family. Group II subfamily. D49 sub-subfamily. As to quaternary structure, heterodimer of an acidic subunit and a basic chain. The acidic subunit is non-toxic, without enzymatic activity and comprises 3 peptides that are cross-linked by 7 disulfide bridges. The basic subunit is toxic, has phospholipase A2 activity and is composed of a single chain. In terms of tissue distribution, expressed by the venom gland.

Its subcellular location is the secreted. In terms of biological role, snake venom phospholipase A2 (PLA2) that inhibits neuromuscular transmission by blocking acetylcholine release from the nerve termini. The protein is Acidic phospholipase A2 homolog sistruxin A of Sistrurus tergeminus (Western massasauga).